Reading from the N-terminus, the 713-residue chain is uncharacterized protein (713 aa).

A helical transmembrane segment spans residues 686 to 706; sequence VWKFNPALYSTITNIFLLIIF.

The protein belongs to the plectrovirus ORF1 family.

The protein localises to the host membrane. This is an uncharacterized protein from Spiroplasma melliferum (SpV1).